The chain runs to 651 residues: Acetyl-coenzyme A synthetase (651 aa).

Residues 190–193 (RGGK), Thr-312, and Asn-336 each bind CoA. Residues 388–390 (GEP), 412–417 (DTWWQT), Asp-501, and Arg-516 each bind ATP. Ser-524 is a binding site for CoA. Position 527 (Arg-527) interacts with ATP. Val-538, His-540, and Val-543 together coordinate Mg(2+). Arg-585 serves as a coordination point for CoA. Lys-610 bears the N6-acetyllysine mark.

The protein belongs to the ATP-dependent AMP-binding enzyme family. Requires Mg(2+) as cofactor. Acetylated. Deacetylation by the SIR2-homolog deacetylase activates the enzyme.

The catalysed reaction is acetate + ATP + CoA = acetyl-CoA + AMP + diphosphate. Functionally, catalyzes the conversion of acetate into acetyl-CoA (AcCoA), an essential intermediate at the junction of anabolic and catabolic pathways. AcsA undergoes a two-step reaction. In the first half reaction, AcsA combines acetate with ATP to form acetyl-adenylate (AcAMP) intermediate. In the second half reaction, it can then transfer the acetyl group from AcAMP to the sulfhydryl group of CoA, forming the product AcCoA. This chain is Acetyl-coenzyme A synthetase, found in Mesorhizobium japonicum (strain LMG 29417 / CECT 9101 / MAFF 303099) (Mesorhizobium loti (strain MAFF 303099)).